Consider the following 467-residue polypeptide: GTPase Der (467 aa).

EngA-type G domains follow at residues 25–188 (PVVA…PEAP) and 199–372 (RRVA…ASWE). GTP-binding positions include 31 to 38 (GRPNVGKS), 78 to 82 (DTGGW), 140 to 143 (NKAD), 205 to 212 (GRPNVGKS), 252 to 256 (DTAGL), and 317 to 320 (NKWD). A KH-like domain is found at 373–455 (TRVPTAQLNA…PIEISVRARK (83 aa)).

It belongs to the TRAFAC class TrmE-Era-EngA-EngB-Septin-like GTPase superfamily. EngA (Der) GTPase family. In terms of assembly, associates with the 50S ribosomal subunit.

Its function is as follows. GTPase that plays an essential role in the late steps of ribosome biogenesis. This is GTPase Der from Salinispora tropica (strain ATCC BAA-916 / DSM 44818 / JCM 13857 / NBRC 105044 / CNB-440).